The primary structure comprises 723 residues: Enolase-phosphatase E1 (723 aa).

Residues 126-127 (SS) and Lys160 each bind substrate. Residues 239 to 723 (GAGAKRKIDE…TPTPPIEAES (485 aa)) are disordered. Composition is skewed to basic and acidic residues over residues 262 to 284 (VKKD…DEPA) and 293 to 308 (AAKE…KMEV). A compositionally biased stretch (low complexity) spans 311–320 (AAAAAAPPAD). 6 stretches are compositionally biased toward basic and acidic residues: residues 322–406 (AEEK…VVEE), 419–443 (AEEK…KPAE), 468–479 (EPAKEKPAEAEA), 487–496 (TKAEVVEKPA), 511–565 (SADK…KGEE), and 577–593 (VEAK…KSDA). Low complexity-rich tracts occupy residues 596-606 (VSTTTTTTSTE) and 636-647 (NGEAEPAAEAVV). The segment covering 653 to 666 (GKHEEKGDSDKEND) has biased composition (basic and acidic residues).

Belongs to the HAD-like hydrolase superfamily. MasA/MtnC family. In terms of assembly, monomer.

It localises to the cytoplasm. Its subcellular location is the nucleus. The catalysed reaction is 5-methylsulfanyl-2,3-dioxopentyl phosphate + H2O = 1,2-dihydroxy-5-(methylsulfanyl)pent-1-en-3-one + phosphate. The protein operates within amino-acid biosynthesis; L-methionine biosynthesis via salvage pathway; L-methionine from S-methyl-5-thio-alpha-D-ribose 1-phosphate: step 3/6. It participates in amino-acid biosynthesis; L-methionine biosynthesis via salvage pathway; L-methionine from S-methyl-5-thio-alpha-D-ribose 1-phosphate: step 4/6. In terms of biological role, bifunctional enzyme that catalyzes the enolization of 2,3-diketo-5-methylthiopentyl-1-phosphate (DK-MTP-1-P) into the intermediate 2-hydroxy-3-keto-5-methylthiopentenyl-1-phosphate (HK-MTPenyl-1-P), which is then dephosphorylated to form the acireductone 1,2-dihydroxy-3-keto-5-methylthiopentene (DHK-MTPene). This is Enolase-phosphatase E1 from Culex quinquefasciatus (Southern house mosquito).